Here is a 360-residue protein sequence, read N- to C-terminus: DNA replication and repair protein RecF (360 aa).

30–37 (GANGSGKT) is a binding site for ATP.

Belongs to the RecF family.

It localises to the cytoplasm. Functionally, the RecF protein is involved in DNA metabolism; it is required for DNA replication and normal SOS inducibility. RecF binds preferentially to single-stranded, linear DNA. It also seems to bind ATP. This chain is DNA replication and repair protein RecF, found in Acinetobacter baumannii (strain ATCC 17978 / DSM 105126 / CIP 53.77 / LMG 1025 / NCDC KC755 / 5377).